The chain runs to 270 residues: uncharacterized protein (270 aa).

The N-terminal stretch at methionine 1–glycine 22 is a signal peptide. A lipid anchor (N-palmitoyl cysteine) is attached at cysteine 23. Cysteine 23 carries S-diacylglycerol cysteine lipidation.

Belongs to the staphylococcal tandem lipoprotein family.

It is found in the cell membrane. This is an uncharacterized protein from Staphylococcus aureus (strain bovine RF122 / ET3-1).